A 517-amino-acid polypeptide reads, in one-letter code: Optineurin (517 aa).

Coiled coils occupy residues 15–127 (NLGS…DLVA) and 174–453 (KAES…LGRH). Disordered regions lie at residues 216–237 (KLEH…TNAS) and 454–488 (SMSE…WQQQ). Residues 222–237 (SSAQTSLPSAAETNAS) are compositionally biased toward polar residues. The CCHC NOA-type zinc-finger motif lies at 487 to 517 (QQNIPDHACPKCGEVLPDLDSLQIHIMDCII). C495, C498, H511, and C515 together coordinate Zn(2+).

Its subcellular location is the cytoplasm. It localises to the perinuclear region. It is found in the golgi apparatus. The protein resides in the trans-Golgi network. The protein localises to the cytoplasmic vesicle. Its subcellular location is the recycling endosome. It localises to the autophagosome. Functionally, probably part of the TNF-alpha signaling pathway that can shift the equilibrium toward induction of cell death. May act by regulating membrane trafficking and cellular morphogenesis. The protein is Optineurin (optn) of Danio rerio (Zebrafish).